We begin with the raw amino-acid sequence, 244 residues long: Cell division protein ZapD (244 aa).

Belongs to the ZapD family. As to quaternary structure, interacts with FtsZ.

Its subcellular location is the cytoplasm. In terms of biological role, cell division factor that enhances FtsZ-ring assembly. Directly interacts with FtsZ and promotes bundling of FtsZ protofilaments, with a reduction in FtsZ GTPase activity. This Shewanella baltica (strain OS185) protein is Cell division protein ZapD.